The chain runs to 177 residues: O-acetyl-ADP-ribose deacetylase (177 aa).

In terms of domain architecture, Macro spans 1-175 (MKSRIHVLQG…LYNRLLTQQG (175 aa)). Substrate contacts are provided by residues 11-12 (DI), N25, 33-35 (GVD), and 122-126 (STGVY). The Proton acceptor role is filled by D35.

Belongs to the MacroD-type family. YmdB subfamily. Homodimer. Interacts with RNase III.

It carries out the reaction 3''-O-acetyl-ADP-D-ribose + H2O = ADP-D-ribose + acetate + H(+). The catalysed reaction is 2''-O-acetyl-ADP-D-ribose + H2O = ADP-D-ribose + acetate + H(+). Deacetylates O-acetyl-ADP ribose to yield ADP-ribose and free acetate. Down-regulates ribonuclease 3 (RNase III) activity. Acts by interacting directly with the region of the ribonuclease that is required for dimerization/activation. This is O-acetyl-ADP-ribose deacetylase from Escherichia fergusonii (strain ATCC 35469 / DSM 13698 / CCUG 18766 / IAM 14443 / JCM 21226 / LMG 7866 / NBRC 102419 / NCTC 12128 / CDC 0568-73).